Here is a 544-residue protein sequence, read N- to C-terminus: Putative cysteine ligase BshC (544 aa).

The stretch at 431-463 (LNDTCRTIKEEHEKFIQELSRLDEKIYDFEEKN) forms a coiled coil.

It belongs to the BshC family.

In terms of biological role, involved in bacillithiol (BSH) biosynthesis. May catalyze the last step of the pathway, the addition of cysteine to glucosamine malate (GlcN-Mal) to generate BSH. This Natranaerobius thermophilus (strain ATCC BAA-1301 / DSM 18059 / JW/NM-WN-LF) protein is Putative cysteine ligase BshC.